The following is a 227-amino-acid chain: Enolase-phosphatase E1 (227 aa).

Residues aspartate 11 and glutamate 13 each coordinate Mg(2+). Substrate-binding positions include 118 to 119 and lysine 161; that span reads SS. Aspartate 186 serves as a coordination point for Mg(2+).

This sequence belongs to the HAD-like hydrolase superfamily. MasA/MtnC family. As to quaternary structure, monomer. Requires Mg(2+) as cofactor.

The protein localises to the cytoplasm. It localises to the nucleus. The enzyme catalyses 5-methylsulfanyl-2,3-dioxopentyl phosphate + H2O = 1,2-dihydroxy-5-(methylsulfanyl)pent-1-en-3-one + phosphate. The protein operates within amino-acid biosynthesis; L-methionine biosynthesis via salvage pathway; L-methionine from S-methyl-5-thio-alpha-D-ribose 1-phosphate: step 3/6. Its pathway is amino-acid biosynthesis; L-methionine biosynthesis via salvage pathway; L-methionine from S-methyl-5-thio-alpha-D-ribose 1-phosphate: step 4/6. Its function is as follows. Bifunctional enzyme that catalyzes the enolization of 2,3-diketo-5-methylthiopentyl-1-phosphate (DK-MTP-1-P) into the intermediate 2-hydroxy-3-keto-5-methylthiopentenyl-1-phosphate (HK-MTPenyl-1-P), which is then dephosphorylated to form the acireductone 1,2-dihydroxy-3-keto-5-methylthiopentene (DHK-MTPene). This is Enolase-phosphatase E1 from Saccharomyces cerevisiae (strain YJM789) (Baker's yeast).